The sequence spans 83 residues: Kunitz-type serine protease inhibitor textilinin-3 (83 aa).

Residues 1–24 (MSSGGLLLLLGLLTLWEVLTPVSS) form the signal peptide. Positions 31-81 (CKLPAETGRCNAKIPRFYYNPRQHQCIEFLYGGCGGNANNFKTIKECESTC) constitute a BPTI/Kunitz inhibitor domain. Cystine bridges form between C31/C81, C40/C64, and C56/C77.

It belongs to the venom Kunitz-type family. In terms of tissue distribution, expressed by the venom gland.

The protein localises to the secreted. In terms of biological role, serine protease inhibitor. Does not inhibit plasmin, and does not reduce blood loss in the mouse tail vein blood loss model. This is Kunitz-type serine protease inhibitor textilinin-3 from Pseudonaja textilis textilis (Eastern brown snake).